We begin with the raw amino-acid sequence, 400 residues long: uncharacterized protein (400 aa).

The first 23 residues, 1–23, serve as a signal peptide directing secretion; sequence MSRKLLLALTFLVVLGIAVVVMA.

This is an uncharacterized protein from Archaeoglobus fulgidus (strain ATCC 49558 / DSM 4304 / JCM 9628 / NBRC 100126 / VC-16).